The sequence spans 252 residues: Eukaryotic translation initiation factor 3 subunit J (252 aa).

Disordered regions lie at residues 24 to 107 and 209 to 232; these read VPAG…TPEE and KQSK…TMKD. Residues 36–56 show a composition bias toward acidic residues; that stretch reads EDEEDDVKDNWDDEEEEEEVK. Residues 57-107 are compositionally biased toward basic and acidic residues; sequence EAEVKQEPKVSEKKKIAEKIKEKEKQQKKKQEELKKRLEAPEEHKELTPEE. The stretch at 65 to 130 forms a coiled coil; sequence KVSEKKKIAE…ESDLELAKET (66 aa).

The protein belongs to the eIF-3 subunit J family. In terms of assembly, component of the eukaryotic translation initiation factor 3 (eIF-3) complex, which is composed of 13 subunits: EIF3A, EIF3B, EIF3C, EIF3D, EIF3E, EIF3F, EIF3G, EIF3H, EIF3I, EIF3J, EIF3K, EIF3L and EIF3M.

Its subcellular location is the cytoplasm. Its function is as follows. Component of the eukaryotic translation initiation factor 3 (eIF-3) complex, which is involved in protein synthesis of a specialized repertoire of mRNAs and, together with other initiation factors, stimulates binding of mRNA and methionyl-tRNAi to the 40S ribosome. The eIF-3 complex specifically targets and initiates translation of a subset of mRNAs involved in cell proliferation. The polypeptide is Eukaryotic translation initiation factor 3 subunit J (Gallus gallus (Chicken)).